The sequence spans 270 residues: Diaminopimelate epimerase (270 aa).

3 residues coordinate substrate: Asn15, Gln49, and Asn66. The active-site Proton donor is the Cys75. Substrate-binding positions include 76-77 (GN), Asn155, Asn187, and 204-205 (ER). The active-site Proton acceptor is Cys213. Substrate is bound at residue 214–215 (GS).

Belongs to the diaminopimelate epimerase family. As to quaternary structure, homodimer.

The protein localises to the cytoplasm. The enzyme catalyses (2S,6S)-2,6-diaminopimelate = meso-2,6-diaminopimelate. Its pathway is amino-acid biosynthesis; L-lysine biosynthesis via DAP pathway; DL-2,6-diaminopimelate from LL-2,6-diaminopimelate: step 1/1. Its function is as follows. Catalyzes the stereoinversion of LL-2,6-diaminopimelate (L,L-DAP) to meso-diaminopimelate (meso-DAP), a precursor of L-lysine and an essential component of the bacterial peptidoglycan. This chain is Diaminopimelate epimerase, found in Rickettsia typhi (strain ATCC VR-144 / Wilmington).